A 358-amino-acid chain; its full sequence is Probable butyrate kinase (358 aa).

Belongs to the acetokinase family.

It localises to the cytoplasm. It carries out the reaction butanoate + ATP = butanoyl phosphate + ADP. This Oceanobacillus iheyensis (strain DSM 14371 / CIP 107618 / JCM 11309 / KCTC 3954 / HTE831) protein is Probable butyrate kinase.